Here is a 107-residue protein sequence, read N- to C-terminus: Large ribosomal subunit protein mL55 (107 aa).

The transit peptide at 1-16 directs the protein to the mitochondrion; the sequence is MLLKQLPQAVQQIRCI.

The protein belongs to the mitochondrion-specific ribosomal protein mL55 family. As to quaternary structure, component of the mitochondrial ribosome large subunit (39S) which comprises a 16S rRNA and about 50 distinct proteins. As to expression, ubiquitously expressed (at protein level).

Its subcellular location is the mitochondrion. Functionally, involved in mitochondrial biogenesis and G2/M phase cell cycle progression. The sequence is that of Large ribosomal subunit protein mL55 (mRpL55) from Drosophila melanogaster (Fruit fly).